A 126-amino-acid chain; its full sequence is Urease subunit beta (126 aa).

The protein belongs to the urease beta subunit family. As to quaternary structure, heterotrimer of UreA (gamma), UreB (beta) and UreC (alpha) subunits. Three heterotrimers associate to form the active enzyme.

It is found in the cytoplasm. The catalysed reaction is urea + 2 H2O + H(+) = hydrogencarbonate + 2 NH4(+). Its pathway is nitrogen metabolism; urea degradation; CO(2) and NH(3) from urea (urease route): step 1/1. The polypeptide is Urease subunit beta (Haloquadratum walsbyi (strain DSM 16790 / HBSQ001)).